A 257-amino-acid chain; its full sequence is Glutamate racemase (257 aa).

Substrate is bound by residues 12 to 13 and 44 to 45; these read DS and YG. The active-site Proton donor/acceptor is Cys-75. 76-77 contacts substrate; sequence NT. The active-site Proton donor/acceptor is Cys-176. 177–178 serves as a coordination point for substrate; the sequence is TH.

Belongs to the aspartate/glutamate racemases family.

It catalyses the reaction L-glutamate = D-glutamate. It participates in cell wall biogenesis; peptidoglycan biosynthesis. Its function is as follows. Provides the (R)-glutamate required for cell wall biosynthesis. This Thermus thermophilus (strain ATCC BAA-163 / DSM 7039 / HB27) protein is Glutamate racemase.